The following is a 292-amino-acid chain: Cyclin-dependent kinase 5 (292 aa).

Positions 4–286 (YEKLEKIGEG…AEEALQHPYF (283 aa)) constitute a Protein kinase domain. ATP-binding positions include 10-18 (IGEGTYGTV) and Lys33. Phosphotyrosine; by ABL1, EPHA4 and FYN is present on Tyr15. Thr17 is modified (phosphothreonine). Residue Lys56 is modified to N6-acetyllysine. Ser72 carries the phosphoserine modification. Catalysis depends on Asp126, which acts as the Proton acceptor. The residue at position 159 (Ser159) is a Phosphoserine.

Belongs to the protein kinase superfamily. CMGC Ser/Thr protein kinase family. CDC2/CDKX subfamily. As to quaternary structure, heterodimer composed of a catalytic subunit CDK5 and a regulatory subunit CDK5R1 (p25) and macromolecular complex composed of at least CDK5, CDK5R1 (p35) and CDK5RAP1 or CDK5RAP2 or CDK5RAP3. Only the heterodimer shows kinase activity. Under neurotoxic stress and neuronal injury conditions, p35 is cleaved by calpain to generate p25 that hyperactivates CDK5, that becomes functionally disabled and often toxic. Found in a trimolecular complex with CABLES1 and ABL1. Interacts with CABLES1 and CABLES2. Interacts with AATK and GSTP1. Binds to HDAC1 when in complex with p25. Interaction with myristoylation p35 promotes CDK5 association with membranes. Both isoforms 1 and 2 interacts with beta-catenin/CTNNB1. Interacts with delta-catenin/CTNND2 and APEX1. Interacts with P53/TP53 in neurons. Interacts with EPHA4; may mediate the activation of NGEF by EPHA4. Interacts with PTK2/FAK1. The complex p35/CDK5 interacts with CLOCK. Interacts with HTR6. In terms of processing, phosphorylation on Tyr-15 by ABL1 and FYN, and on Ser-159 by casein kinase 1 promotes kinase activity. By contrast, phosphorylation at Thr-14 inhibits activity. Phosphorylation at Ser-159 is essential for maximal catalytic activity. Ubiquitously expressed. Accumulates in cortical neurons (at protein level). As to expression, expressed in the testis, skeletal muscle, colon, bone marrow and ovary.

It localises to the cytoplasm. Its subcellular location is the nucleus. It is found in the cell membrane. The protein resides in the perikaryon. The protein localises to the cell projection. It localises to the lamellipodium. Its subcellular location is the growth cone. It is found in the postsynaptic density. The protein resides in the synapse. It catalyses the reaction L-seryl-[protein] + ATP = O-phospho-L-seryl-[protein] + ADP + H(+). The catalysed reaction is L-threonyl-[protein] + ATP = O-phospho-L-threonyl-[protein] + ADP + H(+). Inhibited by 2-(1-ethyl-2-hydroxyethylamino)-6-benzylamino-9-isopropylpurine (roscovitine), 1-isopropyl-4-aminobenzyl-6-ether-linked benzimidazoles, resveratrol, AT-7519 and olomoucine. Activated by CDK5R1 (p35) and CDK5R2 (p39) during the development of the nervous system; degradation of CDK5R1 (p35) and CDK5R2 (p39) by proteasome result in down regulation of kinase activity, during this process, CDK5 phosphorylates p35 and induces its ubiquitination and subsequent degradation. Kinase activity is mainly determined by the amount of p35 available and subcellular location; reversible association to plasma membrane inhibits activity. Long-term inactivation as well as CDK5R1 (p25)-mediated hyperactivation of CDK5 triggers cell death. The pro-death activity of hyperactivated CDK5 is suppressed by membrane association of CDK5, via myristoylation of p35. Brain-derived neurotrophic factor, glial-derived neurotrophic factor, nerve growth factor (NGF), retinoic acid, laminin and neuregulin promote activity. Neurotoxicity enhances nuclear activity, thus leading to MEF2 phosphorylation and inhibition prior to apoptosis of cortical neurons. Repression by GSTP1 via p25/p35 translocation prevents neurodegeneration. In terms of biological role, proline-directed serine/threonine-protein kinase essential for neuronal cell cycle arrest and differentiation and may be involved in apoptotic cell death in neuronal diseases by triggering abortive cell cycle re-entry. Interacts with D1 and D3-type G1 cyclins. Phosphorylates SRC, NOS3, VIM/vimentin, p35/CDK5R1, MEF2A, SIPA1L1, SH3GLB1, PXN, PAK1, MCAM/MUC18, SEPT5, SYN1, DNM1, AMPH, SYNJ1, CDK16, RAC1, RHOA, CDC42, TONEBP/NFAT5, MAPT/TAU, MAP1B, histone H1, p53/TP53, HDAC1, APEX1, PTK2/FAK1, huntingtin/HTT, ATM, MAP2, NEFH and NEFM. Regulates several neuronal development and physiological processes including neuronal survival, migration and differentiation, axonal and neurite growth, synaptogenesis, oligodendrocyte differentiation, synaptic plasticity and neurotransmission, by phosphorylating key proteins. Negatively regulates the CACNA1B/CAV2.2 -mediated Ca(2+) release probability at hippocampal neuronal soma and synaptic terminals. Activated by interaction with CDK5R1 (p35) and CDK5R2 (p39), especially in postmitotic neurons, and promotes CDK5R1 (p35) expression in an autostimulation loop. Phosphorylates many downstream substrates such as Rho and Ras family small GTPases (e.g. PAK1, RAC1, RHOA, CDC42) or microtubule-binding proteins (e.g. MAPT/TAU, MAP2, MAP1B), and modulates actin dynamics to regulate neurite growth and/or spine morphogenesis. Also phosphorylates exocytosis associated proteins such as MCAM/MUC18, SEPT5, SYN1, and CDK16/PCTAIRE1 as well as endocytosis associated proteins such as DNM1, AMPH and SYNJ1 at synaptic terminals. In the mature central nervous system (CNS), regulates neurotransmitter movements by phosphorylating substrates associated with neurotransmitter release and synapse plasticity; synaptic vesicle exocytosis, vesicles fusion with the presynaptic membrane, and endocytosis. Promotes cell survival by activating anti-apoptotic proteins BCL2 and STAT3, and negatively regulating of JNK3/MAPK10 activity. Phosphorylation of p53/TP53 in response to genotoxic and oxidative stresses enhances its stabilization by preventing ubiquitin ligase-mediated proteasomal degradation, and induces transactivation of p53/TP53 target genes, thus regulating apoptosis. Phosphorylation of p35/CDK5R1 enhances its stabilization by preventing calpain-mediated proteolysis producing p25/CDK5R1 and avoiding ubiquitin ligase-mediated proteasomal degradation. During aberrant cell-cycle activity and DNA damage, p25/CDK5 activity elicits cell-cycle activity and double-strand DNA breaks that precedes neuronal death by deregulating HDAC1. DNA damage triggered phosphorylation of huntingtin/HTT in nuclei of neurons protects neurons against polyglutamine expansion as well as DNA damage mediated toxicity. Phosphorylation of PXN reduces its interaction with PTK2/FAK1 in matrix-cell focal adhesions (MCFA) during oligodendrocytes (OLs) differentiation. Negative regulator of Wnt/beta-catenin signaling pathway. Activator of the GAIT (IFN-gamma-activated inhibitor of translation) pathway, which suppresses expression of a post-transcriptional regulon of proinflammatory genes in myeloid cells; phosphorylates the linker domain of glutamyl-prolyl tRNA synthetase (EPRS) in a IFN-gamma-dependent manner, the initial event in assembly of the GAIT complex. Phosphorylation of SH3GLB1 is required for autophagy induction in starved neurons. Phosphorylation of TONEBP/NFAT5 in response to osmotic stress mediates its rapid nuclear localization. MEF2 is inactivated by phosphorylation in nucleus in response to neurotoxin, thus leading to neuronal apoptosis. APEX1 AP-endodeoxyribonuclease is repressed by phosphorylation, resulting in accumulation of DNA damage and contributing to neuronal death. NOS3 phosphorylation down regulates NOS3-derived nitrite (NO) levels. SRC phosphorylation mediates its ubiquitin-dependent degradation and thus leads to cytoskeletal reorganization. May regulate endothelial cell migration and angiogenesis via the modulation of lamellipodia formation. Involved in dendritic spine morphogenesis by mediating the EFNA1-EPHA4 signaling. The complex p35/CDK5 participates in the regulation of the circadian clock by modulating the function of CLOCK protein: phosphorylates CLOCK at 'Thr-451' and 'Thr-461' and regulates the transcriptional activity of the CLOCK-BMAL1 heterodimer in association with altered stability and subcellular distribution. The protein is Cyclin-dependent kinase 5 of Homo sapiens (Human).